Here is a 222-residue protein sequence, read N- to C-terminus: Putative N-acetylmannosamine-6-phosphate 2-epimerase (222 aa).

Belongs to the NanE family.

It catalyses the reaction an N-acyl-D-glucosamine 6-phosphate = an N-acyl-D-mannosamine 6-phosphate. Its pathway is amino-sugar metabolism; N-acetylneuraminate degradation; D-fructose 6-phosphate from N-acetylneuraminate: step 3/5. Its function is as follows. Converts N-acetylmannosamine-6-phosphate (ManNAc-6-P) to N-acetylglucosamine-6-phosphate (GlcNAc-6-P). In Oceanobacillus iheyensis (strain DSM 14371 / CIP 107618 / JCM 11309 / KCTC 3954 / HTE831), this protein is Putative N-acetylmannosamine-6-phosphate 2-epimerase.